The primary structure comprises 308 residues: Putative S-adenosyl-L-methionine-dependent methyltransferase MAB_4584c (308 aa).

S-adenosyl-L-methionine-binding positions include Asp-131 and 160–161 (DL).

This sequence belongs to the UPF0677 family.

Its function is as follows. Exhibits S-adenosyl-L-methionine-dependent methyltransferase activity. This chain is Putative S-adenosyl-L-methionine-dependent methyltransferase MAB_4584c, found in Mycobacteroides abscessus (strain ATCC 19977 / DSM 44196 / CCUG 20993 / CIP 104536 / JCM 13569 / NCTC 13031 / TMC 1543 / L948) (Mycobacterium abscessus).